The chain runs to 142 residues: Domesticated amidase effector 2 (142 aa).

A signal peptide spans 1-35 (MKLFLISAALVVLGLAAVADAIGCSDPSPFQGRWV). Active-site residues include Cys43 and His94.

This sequence belongs to the cell wall amidase Dae2/Tae2-like family. In terms of processing, may be post-translationally modified, since the saliva wild-type protein is slightly heavier than the recombinant one. In terms of tissue distribution, detected in salivary glands and in the gut (at protein level).

It is found in the secreted. In terms of biological role, tick gut and saliva antibacterial peptide that directly antagonizes host skin commensals which enter the ticks during feeding. Acts as a cell wall hydrolase that cleaves the bond between gamma-D-glutamate-meso-diaminopimelate of a peptide stem and D-alanine of another peptide stem in peptidoglycans. In vitro, degrades peptidoglycans from both Gram-negative and Gram-positive bacteria. Is not able to traverse the protective outer membrane of Gram-negative bacteria. Is not able to kill Borrelia burgdorferi, one of the Lyme disease-causing bacteria. This chain is Domesticated amidase effector 2, found in Ixodes scapularis (Black-legged tick).